The following is a 98-amino-acid chain: NADH-ubiquinone oxidoreductase chain 4L (98 aa).

3 helical membrane passes run 1–21, 29–49, and 59–79; these read MSIV…GTLL, SLMC…LISL, and VPLI…ALLV.

Belongs to the complex I subunit 4L family. In terms of assembly, core subunit of respiratory chain NADH dehydrogenase (Complex I) which is composed of 45 different subunits.

It is found in the mitochondrion inner membrane. The catalysed reaction is a ubiquinone + NADH + 5 H(+)(in) = a ubiquinol + NAD(+) + 4 H(+)(out). In terms of biological role, core subunit of the mitochondrial membrane respiratory chain NADH dehydrogenase (Complex I) which catalyzes electron transfer from NADH through the respiratory chain, using ubiquinone as an electron acceptor. Part of the enzyme membrane arm which is embedded in the lipid bilayer and involved in proton translocation. The chain is NADH-ubiquinone oxidoreductase chain 4L (MT-ND4L) from Hemiechinus auritus (Long-eared hedgehog).